The primary structure comprises 728 residues: Plakophilin-1 (728 aa).

Residues 1-235 are required for binding to single stranded DNA; that stretch reads MNHSPLKTAL…SFGHSRASSK (235 aa). The interval 1-287 is required for interaction with EIF4A1; that stretch reads MNHSPLKTAL…ESAKQQVYQL (287 aa). At S4 the chain carries Phosphoserine; by RIPK4. Positions 48–69 are disordered; sequence TVKRQKSKSSQSSTLSHSNRGS. Phosphorylation in this region is required for cytoplasmic localization and protein stabilization regions lie at residues 54–69 and 117–192; these read SKSSQSSTLSHSNRGS and RFSS…STCS. A Phosphoserine modification is found at S119. The residue at position 120 (S120) is a Phosphoserine; by RIPK4. S122 bears the Phosphoserine mark. Phosphoserine; by RIPK4 is present on S143. The required for WNT-mediated nuclear localization stretch occupies residues 161–270; it reads YCDPRGTLRK…KYQAIGAYYI (110 aa). ARM repeat units lie at residues 244–275, 276–317, 318–360, 361–412, 413–443, 505–536, 537–583, 584–629, and 630–694; these read SGLTIPKAVQYLCSQDEKYQAIGAYYIQHTCF, QDES…NLVF, RSTP…NLSS, TDEL…GCLR, NLSSADAGRQTMRNYSGLIDSLMAYVQNCVA, NYDCPLPEEETNPKGSSWLYHSDAIRTYLNLM, GKSK…IARL, LQSG…SHTG, and NTSN…DMWA.

The protein belongs to the beta-catenin family. In terms of assembly, part of a complex that contains DSG3, PKP1, YAP1 and YWHAG; the complex is required for localization of DSG3 and YAP1 to the cell membrane in keratinocytes. Interacts (via N-terminus) with KRT5/CK5, KRT8/CK8 (via rod domain), KRT15/CK15 and KRT18/CK18 (via rod domain) as part of intermediate filaments. Interacts with VIM (via rod domain). Interacts with DSP. Interacts with DES. Interacts with FXR1; the interaction may facilitate the binding of PKP1 to PKP2, PKP3 and DSP mRNA. Interacts (via N-terminus) with EIF4A1; the interaction promotes EIF4A1 recruitment to the cap-dependent translation complex and EIF4A1 ATPase activity. Interacts with TJP1/ZO-1; the interaction facilitates TJP1/ZO-1 localization to the plasma membrane. Interacts (when phosphorylated) with YWHAG; the interaction results in translocation of PKP1 to the cytoplasm and loss of intercellular adhesion in keratinocytes. Post-translationally, phosphorylated by AKT2; required for interaction with YWHAG and subsequent localization away from desmosomes to the cytoplasm. Phosphorylation of Ser-119 by AKT2 promotes PKP1-driven cap-dependent mRNA translation and decreases intercellular adhesion, phosphorylation is promoted by insulin. Phosphorylation by RIPK4 at the N-terminus is required for its role in differentiation of keratinocytes and DSG1 localization at cell junctions. Expressed in undifferentiated keratinocytes of the epidermis at birth, expression increases as differentiation proceeds (at protein level). Expressed in the cervical loop during early tooth differentiation, expression is then present between ameloblasts, at ameloblast-ameloblast junctions and in the stratum intermedium during pre-secretory and secretory stages of tooth development (at protein level).

The protein resides in the nucleus. Its subcellular location is the cytoplasm. It localises to the perinuclear region. The protein localises to the cell junction. It is found in the desmosome. The protein resides in the cell membrane. Its subcellular location is the stress granule. In terms of biological role, a component of desmosome cell-cell junctions which are required for positive regulation of cellular adhesion. Plays a role in desmosome protein expression regulation and localization to the desmosomal plaque, thereby maintaining cell sheet integrity and anchorage of desmosomes to intermediate filaments. Required for localization of DSG3 and YAP1 to the cell membrane in keratinocytes in response to mechanical strain, via the formation of an interaction complex composed of DSG3, YAP1, PKP1 and YWHAG. Positively regulates differentiation of keratinocytes, potentially via promoting localization of DSG1 at desmosome cell junctions. Required for calcium-independent development and maturation of desmosome plaques specifically at lateral cell-cell contacts in differentiating keratinocytes. Plays a role in the maintenance of DSG3 protein abundance, DSG3 clustering and localization of these clusters to the cell membrane in keratinocytes. May also promote keratinocyte proliferation and morphogenesis during postnatal development. Required for tight junction inside-out transepidermal barrier function of the skin, and is thereby involved in neonatal survival possibly via maintenance of hydration levels. Promotes Wnt-mediated proliferation and differentiation of ameloblasts, via facilitating TJP1/ZO-1 localization to tight junctions. Binds single-stranded DNA (ssDNA), and may thereby play a role in sensing DNA damage and promoting cell survival. Positively regulates cap-dependent translation and as a result cell proliferation, via recruitment of EIF4A1 to the initiation complex and promotion of EIF4A1 ATPase activity. Regulates the mRNA stability and protein abundance of desmosome components PKP2, PKP3, DSC2 and DSP, potentially via its interaction with FXR1. This is Plakophilin-1 (Pkp1) from Mus musculus (Mouse).